Here is a 553-residue protein sequence, read N- to C-terminus: MADPEVVVSSCSSHEEENRCNFNQQTSPSEELLLEDQMRRKLKFFFMNPCEKFWARGRKPWKLAIQILKIAMVTIQLVLFGLSNQMVVAFKEENTIAFKHLFLKGYMDRMDDTYAVYTQSDVYDQLIFAVNQYLQLYNVSVGNHAYENKGTKQSAMAICQHFYKRGNIYPGNDTFDIDPEIETECFFVEPDEPFHIGTPAENKLNLTLDFHRLLTVELQFKLKAINLQTVRHQELPDCYDFTLTITFDNKAHSGRIKISLDNDISIRECKDWHVSGSIQKNTHYMMIFDAFVILTCLVSLILCIRSVIRGLQLQQEFVNFFLLHYKKEVSVSDQMEFVNGWYIMIIISDILTIIGSILKMEIQAKSLTSYDVCSILLGTSTMLVWLGVIRYLGFFAKYNLLILTLQAALPNVIRFCCCAAMIYLGYCFCGWIVLGPYHDKFRSLNMVSECLFSLINGDDMFATFAKMQQKSYLVWLFSRIYLYSFISLFIYMILSLFIALITDTYETIKQYQQDGFPETELRTFISECKDLPNSGKYRLEDDPPVSLFCCCKK.

Over 1 to 62 (MADPEVVVSS…FWARGRKPWK (62 aa)) the chain is Cytoplasmic. The segment at 52–62 (KFWARGRKPWK) is interaction with phosphoinositides. Residues 63-83 (LAIQILKIAMVTIQLVLFGLS) traverse the membrane as a helical segment. The Extracellular segment spans residues 84 to 283 (NQMVVAFKEE…VSGSIQKNTH (200 aa)). The extracellular/lumenal pore loop stretch occupies residues 104–118 (KGYMDRMDDTYAVYT). N-linked (GlcNAc...) asparagine glycosylation is found at Asn-138, Asn-172, and Asn-205. A disulfide bridge links Cys-159 with Cys-185. The cysteines at positions 238 and 269 are disulfide-linked. A helical transmembrane segment spans residues 284–304 (YMMIFDAFVILTCLVSLILCI). Topologically, residues 305–341 (RSVIRGLQLQQEFVNFFLLHYKKEVSVSDQMEFVNGW) are cytoplasmic. The chain crosses the membrane as a helical span at residues 342-362 (YIMIIISDILTIIGSILKMEI). Over 363 to 371 (QAKSLTSYD) the chain is Extracellular. Residues 372 to 392 (VCSILLGTSTMLVWLGVIRYL) traverse the membrane as a helical segment. Residues 393 to 414 (GFFAKYNLLILTLQAALPNVIR) lie on the Cytoplasmic side of the membrane. Residues 415 to 435 (FCCCAAMIYLGYCFCGWIVLG) traverse the membrane as a helical segment. The Extracellular segment spans residues 436–443 (PYHDKFRS). Positions 444-464 (LNMVSECLFSLINGDDMFATF) form an intramembrane region, pore-forming. A Selectivity filter motif is present at residues 456–459 (NGDD). The Extracellular portion of the chain corresponds to 465–475 (AKMQQKSYLVW). The chain crosses the membrane as a helical span at residues 476-497 (LFSRIYLYSFISLFIYMILSLF). Over 498-553 (IALITDTYETIKQYQQDGFPETELRTFISECKDLPNSGKYRLEDDPPVSLFCCCKK) the chain is Cytoplasmic.

It belongs to the transient receptor (TC 1.A.4) family. Polycystin subfamily. MCOLN3 sub-subfamily. In terms of assembly, homotetramer. Can heterooligomerize with MCOLN1; heteromeric assemblies have different channel properties as compared to the respective homooligomers and may be tissue-specific. May heterooligomerize with TRPV5 to form a functional distinct ion channel. Interacts with GABARAPL2. In terms of processing, N-glycosylated.

The protein localises to the cell membrane. It localises to the early endosome membrane. Its subcellular location is the late endosome membrane. The protein resides in the lysosome membrane. It is found in the cytoplasmic vesicle. The protein localises to the autophagosome membrane. It carries out the reaction Ca(2+)(in) = Ca(2+)(out). It catalyses the reaction K(+)(in) = K(+)(out). The enzyme catalyses Na(+)(in) = Na(+)(out). Its activity is regulated as follows. Channel activity is activated by PtdIns(3,5)P2 (phosphatidylinositol 3,5-bisphosphate). Inhibited by lumenal H(+) and Na(+). The channel pore shows dynamic behavior and undergoes spontaneous, Ca(2+)-dependent modulation when conducting Ca(2+). In terms of biological role, nonselective cation channel probably playing a role in the regulation of membrane trafficking events. Acts as a Ca(2+)-permeable cation channel with inwardly rectifying activity. Mediates release of Ca(2+) from endosomes to the cytoplasm, contributes to endosomal acidification and is involved in the regulation of membrane trafficking and fusion in the endosomal pathway. Also permeable to Mg(2+), Na(+) and K(+). Does not seem to act as mechanosensory transduction channel in inner ear sensory hair cells. Proposed to play a critical role at the cochlear stereocilia ankle-link region during hair-bundle growth. Involved in the regulation of autophagy. Through association with GABARAPL2 may be involved in autophagosome formation possibly providing Ca(2+) for the fusion process. Through a possible and probably tissue-specific heteromerization with MCOLN1 may be at least in part involved in many lysosome-dependent cellular events. Possible heteromeric ion channel assemblies with TRPV5 show pharmacological similarity with TRPML3. The chain is Mucolipin-3 (MCOLN3) from Homo sapiens (Human).